Consider the following 977-residue polypeptide: Structural protein ORF43 (977 aa).

Residues 531–556 (DNDNINKQQQQQRERNDDDDDDDDST) form a disordered region.

The protein belongs to the ascovirus HvAV ORF146 family.

It is found in the virion. The polypeptide is Structural protein ORF43 (Noctuidae (owlet moths)).